A 398-amino-acid chain; its full sequence is S-adenosylmethionine synthase (398 aa).

ATP is bound at residue Gly-136–Asp-141.

This sequence belongs to the AdoMet synthase 2 family. Mg(2+) is required as a cofactor.

It carries out the reaction L-methionine + ATP + H2O = S-adenosyl-L-methionine + phosphate + diphosphate. The protein operates within amino-acid biosynthesis; S-adenosyl-L-methionine biosynthesis; S-adenosyl-L-methionine from L-methionine: step 1/1. Its function is as follows. Catalyzes the formation of S-adenosylmethionine from methionine and ATP. The protein is S-adenosylmethionine synthase of Methanosarcina acetivorans (strain ATCC 35395 / DSM 2834 / JCM 12185 / C2A).